The sequence spans 614 residues: Sulfite reductase [NADPH] flavoprotein alpha-component (614 aa).

Positions leucine 79 to leucine 217 constitute a Flavodoxin-like domain. Residues serine 85–alanine 90, serine 132–glycine 135, and leucine 168–cysteine 177 contribute to the FMN site. An FAD-binding FR-type domain is found at glutamate 249–proline 463. Residues threonine 337, threonine 371, arginine 401–serine 404, threonine 419–glycine 421, tyrosine 425, and glycine 434–serine 437 each bind FAD. NADP(+)-binding positions include serine 534–arginine 535, lysine 540–glutamine 544, and aspartate 576. Tyrosine 614 lines the FAD pocket.

The protein belongs to the NADPH-dependent sulphite reductase flavoprotein subunit CysJ family. It in the N-terminal section; belongs to the flavodoxin family. In the C-terminal section; belongs to the flavoprotein pyridine nucleotide cytochrome reductase family. Alpha(8)-beta(8). The alpha component is a flavoprotein, the beta component is a hemoprotein. The cofactor is FAD. It depends on FMN as a cofactor.

It catalyses the reaction hydrogen sulfide + 3 NADP(+) + 3 H2O = sulfite + 3 NADPH + 4 H(+). The protein operates within sulfur metabolism; hydrogen sulfide biosynthesis; hydrogen sulfide from sulfite (NADPH route): step 1/1. Its function is as follows. Component of the sulfite reductase complex that catalyzes the 6-electron reduction of sulfite to sulfide. This is one of several activities required for the biosynthesis of L-cysteine from sulfate. The flavoprotein component catalyzes the electron flow from NADPH -&gt; FAD -&gt; FMN to the hemoprotein component. The polypeptide is Sulfite reductase [NADPH] flavoprotein alpha-component (Vibrio cholerae serotype O1 (strain ATCC 39315 / El Tor Inaba N16961)).